Here is a 2890-residue protein sequence, read N- to C-terminus: Bifunctional DNA-directed RNA polymerase subunit beta-beta' (2890 aa).

The DNA-directed RNA polymerase subunit beta stretch occupies residues 1–1377 (MSKKIPLKNR…DINIFGDEMD (1377 aa)). The interval 1384 to 2890 (PIVIKEDDRP…LRTIEDSPKI (1507 aa)) is DNA-directed RNA polymerase subunit beta'. The Zn(2+) site is built by C1449, C1451, C1465, and C1468. Positions 1849, 1851, and 1853 each coordinate Mg(2+). The Zn(2+) site is built by C2179, C2253, C2260, and C2263.

In the N-terminal section; belongs to the RNA polymerase beta chain family. This sequence in the C-terminal section; belongs to the RNA polymerase beta' chain family. In terms of assembly, the RNAP catalytic core consists of 2 alpha, 1 beta/beta' and 1 omega subunit. When a sigma factor is associated with the core the holoenzyme is formed, which can initiate transcription. It depends on Mg(2+) as a cofactor. Zn(2+) serves as cofactor.

It carries out the reaction RNA(n) + a ribonucleoside 5'-triphosphate = RNA(n+1) + diphosphate. Its function is as follows. DNA-dependent RNA polymerase catalyzes the transcription of DNA into RNA using the four ribonucleoside triphosphates as substrates. This chain is Bifunctional DNA-directed RNA polymerase subunit beta-beta' (rpoBC), found in Helicobacter acinonychis (strain Sheeba).